Reading from the N-terminus, the 320-residue chain is Peptidase 1 (320 aa).

The first 18 residues, 1–18, serve as a signal peptide directing secretion; the sequence is MKIVLAIASLLALSAVYA. Positions 19-98 are cleaved as a propeptide — activation peptide; it reads RPSSIKTFEE…LKTQFDLNAE (80 aa). 3 disulfide bridges follow: cysteine 102–cysteine 215, cysteine 129–cysteine 169, and cysteine 163–cysteine 201. Cysteine 132 is a catalytic residue. Asparagine 150 is a glycosylation site (N-linked (GlcNAc...) asparagine). Active-site residues include histidine 268 and asparagine 288.

This sequence belongs to the peptidase C1 family. N-glycosylated. N-glycanase treatment does not completely remove carbohydrates, suggesting that the protein contains additional glycosylation sites.

Its subcellular location is the secreted. It carries out the reaction Broad endopeptidase specificity.. Its function is as follows. Thiol protease, with a preference for substrates with a large hydrophobic side chain in the P2 position, or with basic residues. The protein is Peptidase 1 (DERP1) of Dermatophagoides pteronyssinus (European house dust mite).